The sequence spans 118 residues: Phosphoribosyl-AMP cyclohydrolase (118 aa).

Asp-87 contributes to the Mg(2+) binding site. Cys-88 is a binding site for Zn(2+). Asp-89 and Asp-91 together coordinate Mg(2+). The Zn(2+) site is built by Cys-104 and Cys-111.

Belongs to the PRA-CH family. In terms of assembly, homodimer. The cofactor is Mg(2+). Zn(2+) serves as cofactor.

The protein localises to the cytoplasm. It catalyses the reaction 1-(5-phospho-beta-D-ribosyl)-5'-AMP + H2O = 1-(5-phospho-beta-D-ribosyl)-5-[(5-phospho-beta-D-ribosylamino)methylideneamino]imidazole-4-carboxamide. It functions in the pathway amino-acid biosynthesis; L-histidine biosynthesis; L-histidine from 5-phospho-alpha-D-ribose 1-diphosphate: step 3/9. In terms of biological role, catalyzes the hydrolysis of the adenine ring of phosphoribosyl-AMP. The polypeptide is Phosphoribosyl-AMP cyclohydrolase (Corynebacterium glutamicum (strain ATCC 13032 / DSM 20300 / JCM 1318 / BCRC 11384 / CCUG 27702 / LMG 3730 / NBRC 12168 / NCIMB 10025 / NRRL B-2784 / 534)).